We begin with the raw amino-acid sequence, 231 residues long: Ureidoacrylate amidohydrolase RutB (231 aa).

The active-site Proton acceptor is the aspartate 25. Lysine 134 is an active-site residue. Residue cysteine 167 is the Nucleophile of the active site.

It belongs to the isochorismatase family. RutB subfamily.

It carries out the reaction (Z)-3-ureidoacrylate + H2O + H(+) = (Z)-3-aminoacrylate + NH4(+) + CO2. It catalyses the reaction (Z)-3-ureidoacrylate + H2O = (Z)-3-aminoacrylate + carbamate + H(+). The catalysed reaction is (Z)-2-methylureidoacrylate + H2O + H(+) = (Z)-2-methylaminoacrylate + NH4(+) + CO2. Functionally, hydrolyzes ureidoacrylate to form aminoacrylate and carbamate. The carbamate hydrolyzes spontaneously, thereby releasing one of the nitrogen atoms of the pyrimidine ring as ammonia and one of its carbon atoms as CO2. This chain is Ureidoacrylate amidohydrolase RutB, found in Escherichia coli O9:H4 (strain HS).